Consider the following 245-residue polypeptide: 2,3-bisphosphoglycerate-dependent phosphoglycerate mutase (245 aa).

Residues 8 to 15 (RHGQSLWN), 21 to 22 (TG), Arg60, 87 to 90 (ERHY), Lys98, 114 to 115 (RR), and 183 to 184 (GN) each bind substrate. The active-site Tele-phosphohistidine intermediate is His9. Glu87 functions as the Proton donor/acceptor in the catalytic mechanism.

The protein belongs to the phosphoglycerate mutase family. BPG-dependent PGAM subfamily.

It carries out the reaction (2R)-2-phosphoglycerate = (2R)-3-phosphoglycerate. It participates in carbohydrate degradation; glycolysis; pyruvate from D-glyceraldehyde 3-phosphate: step 3/5. Functionally, catalyzes the interconversion of 2-phosphoglycerate and 3-phosphoglycerate. In Bacillus cereus (strain B4264), this protein is 2,3-bisphosphoglycerate-dependent phosphoglycerate mutase.